Reading from the N-terminus, the 596-residue chain is MDKNKLIGLILISILLIVYTHFFDNKLPKTSQQTTTQEVAHNTSNIQLQTSEATLNLQTGIFAKATQGVTKDIILENKDIRVTLSSHGAKVKEVILKQYKDYLGKPLKLLDEQSTNMGFQFTSNQASINTNTLFFNTDDTDQYIQQASIGKVTFMIPLGEPNQYLQQVYTLPSEGYALTQNWEFVGTENYIDQGKIDFVWHDFIKRAEKDVQACRNKTTINYYLANKTFKHLKEHTEQKEEQTIQTPIQWLAIKQRFFTAGIFTDQPFESGNILLKPTTQPDKFVKEAYTTVSLASNNLQPIQKGTFRFYFGPNTYKDLNSFAQGFSKNLPLGWPIVKWINLYLIIPIFSFIEKYVSNYGLVILILVIFIKLLLLPLSYKSYISMAEMKVLKPTLDALKAKYGNDMQSVQMEQVKLYREMGINPLSGCIPVLLQMPILLAMFNFFPNAIDLRQKAFLWAPDLSTYDAIINLPFQIPFYGSHVSLFTLLMTASTILYTWSSNQVNTPQGPMKTMSYLLPITFMFILNSFPAGLSFYYFVSNLFTFAQQALIKRFVNEDKIKAKLAKNKEKSANNKEGSFKKRFQDAIKASASHKGKK.

6 consecutive transmembrane segments (helical) span residues 4–24, 332–352, 359–379, 425–445, 468–488, and 518–538; these read NKLIGLILISILLIVYTHFFD, LGWPIVKWINLYLIIPIFSFI, YGLVILILVIFIKLLLLPLSY, LSGCIPVLLQMPILLAMFNFF, IINLPFQIPFYGSHVSLFTLL, and PITFMFILNSFPAGLSFYYFV. Residues 565–584 show a composition bias toward basic and acidic residues; the sequence is KNKEKSANNKEGSFKKRFQD. The tract at residues 565–596 is disordered; the sequence is KNKEKSANNKEGSFKKRFQDAIKASASHKGKK.

It belongs to the OXA1/ALB3/YidC family. Type 1 subfamily. In terms of assembly, interacts with the Sec translocase complex via SecD. Specifically interacts with transmembrane segments of nascent integral membrane proteins during membrane integration.

It is found in the cell inner membrane. Its function is as follows. Required for the insertion and/or proper folding and/or complex formation of integral membrane proteins into the membrane. Involved in integration of membrane proteins that insert both dependently and independently of the Sec translocase complex, as well as at least some lipoproteins. Aids folding of multispanning membrane proteins. The polypeptide is Membrane protein insertase YidC (Amoebophilus asiaticus (strain 5a2)).